The sequence spans 560 residues: Eukaryotic translation initiation factor 3 subunit D-1 (560 aa).

The interval 98 to 166 is disordered; it reads VQKPPHQRGR…RGPPPKMRES (69 aa). The segment covering 100-121 has biased composition (basic residues); it reads KPPHQRGRFRNMRNSRSGRGRN. Residue threonine 128 is modified to Phosphothreonine. Residues 147–156 show a composition bias toward basic residues; it reads GRGMGKKFGH. Residues 291 to 305 are RNA gate; it reads EFDLLTVNESSVEPP.

It belongs to the eIF-3 subunit D family. In terms of assembly, component of the eukaryotic translation initiation factor 3 (eIF-3) complex. The eIF-3 complex interacts with pix.

Its subcellular location is the cytoplasm. Functionally, mRNA cap-binding component of the eukaryotic translation initiation factor 3 (eIF-3) complex, which is involved in protein synthesis of a specialized repertoire of mRNAs and, together with other initiation factors, stimulates binding of mRNA and methionyl-tRNAi to the 40S ribosome. The eIF-3 complex specifically targets and initiates translation of a subset of mRNAs involved in cell proliferation. In the eIF-3 complex, eif3d specifically recognizes and binds the 7-methylguanosine cap of a subset of mRNAs. This Drosophila simulans (Fruit fly) protein is Eukaryotic translation initiation factor 3 subunit D-1.